Reading from the N-terminus, the 428-residue chain is ORC1-type DNA replication protein 5 (428 aa).

Residues 62-66 (TGKSL), Tyr219, and Arg231 contribute to the ATP site.

The protein belongs to the CDC6/cdc18 family.

Involved in regulation of DNA replication. The polypeptide is ORC1-type DNA replication protein 5 (orc5) (Halobacterium salinarum (strain ATCC 700922 / JCM 11081 / NRC-1) (Halobacterium halobium)).